Here is a 391-residue protein sequence, read N- to C-terminus: Homocitrate synthase AksA (391 aa).

In terms of domain architecture, Pyruvate carboxyltransferase spans 20–271 (ITIYDTTLRD…DLGFNIGVLY (252 aa)).

The protein belongs to the alpha-IPM synthase/homocitrate synthase family.

It carries out the reaction acetyl-CoA + 2-oxoglutarate + H2O = (2R)-homocitrate + CoA + H(+). The enzyme catalyses 2-oxoadipate + acetyl-CoA + H2O = (R)-dihomocitrate + CoA + H(+). The catalysed reaction is 2-oxoheptanedioate + acetyl-CoA + H2O = (R)-trihomocitrate + CoA + H(+). It functions in the pathway organic acid metabolism; 2-oxosuberate biosynthesis. In terms of biological role, catalyzes the condensation of alpha-ketoglutarate and acetyl-CoA to form (R)-homocitrate. Can also catalyze the condensation of alpha-ketoadipate with acetyl-CoA to form (R)-homo(2)citrate, and the condensation of alpha-ketopimelate with acetyl-CoA to form (R)-homo(3)citrate. These reactions are part of the biosynthesis pathway of coenzyme B and biotin. This is Homocitrate synthase AksA (aksA) from Methanothermobacter thermautotrophicus (strain ATCC 29096 / DSM 1053 / JCM 10044 / NBRC 100330 / Delta H) (Methanobacterium thermoautotrophicum).